Reading from the N-terminus, the 263-residue chain is Stress-response A/B barrel domain-containing protein UP3 (263 aa).

Stress-response A/B barrel domains lie at 49 to 142 and 158 to 252; these read IEHI…AVDW and VAKL…VVEF. Positions 261-263 match the Peroxisomal targeting signal motif; that stretch reads SSL.

In terms of assembly, homodimer.

The protein localises to the peroxisome. Functionally, involved in stress response. This is Stress-response A/B barrel domain-containing protein UP3 from Arabidopsis thaliana (Mouse-ear cress).